Here is a 404-residue protein sequence, read N- to C-terminus: Argininosuccinate synthase (404 aa).

ATP-binding positions include 11–19 (AYSGGLDTS) and Ala-38. Positions 91 and 96 each coordinate L-citrulline. Gly-121 contacts ATP. L-aspartate is bound by residues Thr-123, Asn-127, and Asp-128. Asn-127 contributes to the L-citrulline binding site. Arg-131, Ser-181, Ser-190, Glu-266, and Tyr-278 together coordinate L-citrulline.

This sequence belongs to the argininosuccinate synthase family. Type 1 subfamily. In terms of assembly, homotetramer.

It is found in the cytoplasm. The catalysed reaction is L-citrulline + L-aspartate + ATP = 2-(N(omega)-L-arginino)succinate + AMP + diphosphate + H(+). It functions in the pathway amino-acid biosynthesis; L-arginine biosynthesis; L-arginine from L-ornithine and carbamoyl phosphate: step 2/3. The protein is Argininosuccinate synthase of Sulfurimonas denitrificans (strain ATCC 33889 / DSM 1251) (Thiomicrospira denitrificans (strain ATCC 33889 / DSM 1251)).